Consider the following 160-residue polypeptide: SsrA-binding protein (160 aa).

Belongs to the SmpB family.

It is found in the cytoplasm. In terms of biological role, required for rescue of stalled ribosomes mediated by trans-translation. Binds to transfer-messenger RNA (tmRNA), required for stable association of tmRNA with ribosomes. tmRNA and SmpB together mimic tRNA shape, replacing the anticodon stem-loop with SmpB. tmRNA is encoded by the ssrA gene; the 2 termini fold to resemble tRNA(Ala) and it encodes a 'tag peptide', a short internal open reading frame. During trans-translation Ala-aminoacylated tmRNA acts like a tRNA, entering the A-site of stalled ribosomes, displacing the stalled mRNA. The ribosome then switches to translate the ORF on the tmRNA; the nascent peptide is terminated with the 'tag peptide' encoded by the tmRNA and targeted for degradation. The ribosome is freed to recommence translation, which seems to be the essential function of trans-translation. The sequence is that of SsrA-binding protein from Erwinia tasmaniensis (strain DSM 17950 / CFBP 7177 / CIP 109463 / NCPPB 4357 / Et1/99).